Consider the following 351-residue polypeptide: Anthranilate phosphoribosyltransferase (351 aa).

5-phospho-alpha-D-ribose 1-diphosphate-binding positions include Gly92, 95 to 96, Thr100, 102 to 105, 120 to 128, and Ser132; these read GD, NIST, and KHGNRAASS. Gly92 contacts anthranilate. A Mg(2+)-binding site is contributed by Ser104. Asn123 provides a ligand contact to anthranilate. Residue Arg178 coordinates anthranilate. Positions 236 and 237 each coordinate Mg(2+).

Belongs to the anthranilate phosphoribosyltransferase family. Homodimer. Requires Mg(2+) as cofactor.

It carries out the reaction N-(5-phospho-beta-D-ribosyl)anthranilate + diphosphate = 5-phospho-alpha-D-ribose 1-diphosphate + anthranilate. It functions in the pathway amino-acid biosynthesis; L-tryptophan biosynthesis; L-tryptophan from chorismate: step 2/5. In terms of biological role, catalyzes the transfer of the phosphoribosyl group of 5-phosphorylribose-1-pyrophosphate (PRPP) to anthranilate to yield N-(5'-phosphoribosyl)-anthranilate (PRA). This chain is Anthranilate phosphoribosyltransferase, found in Deinococcus geothermalis (strain DSM 11300 / CIP 105573 / AG-3a).